The following is a 356-amino-acid chain: Carbamoyl phosphate synthase small chain (356 aa).

Positions 1–160 are CPSase; the sequence is MKGYLKLEDG…TKKPYRIAGI (160 aa). 3 residues coordinate L-glutamine: serine 45, glycine 211, and glycine 213. A Glutamine amidotransferase type-1 domain is found at 163–350; sequence KLAFIDLGTK…MDIVMVYKRR (188 aa). Cysteine 238 (nucleophile) is an active-site residue. L-glutamine-binding residues include leucine 239, glutamine 242, asparagine 280, glycine 282, and tyrosine 283. Catalysis depends on residues histidine 323 and glutamate 325.

This sequence belongs to the CarA family. In terms of assembly, composed of two chains; the small (or glutamine) chain promotes the hydrolysis of glutamine to ammonia, which is used by the large (or ammonia) chain to synthesize carbamoyl phosphate. Tetramer of heterodimers (alpha,beta)4.

It catalyses the reaction hydrogencarbonate + L-glutamine + 2 ATP + H2O = carbamoyl phosphate + L-glutamate + 2 ADP + phosphate + 2 H(+). The catalysed reaction is L-glutamine + H2O = L-glutamate + NH4(+). It participates in amino-acid biosynthesis; L-arginine biosynthesis; carbamoyl phosphate from bicarbonate: step 1/1. It functions in the pathway pyrimidine metabolism; UMP biosynthesis via de novo pathway; (S)-dihydroorotate from bicarbonate: step 1/3. Its function is as follows. Small subunit of the glutamine-dependent carbamoyl phosphate synthetase (CPSase). CPSase catalyzes the formation of carbamoyl phosphate from the ammonia moiety of glutamine, carbonate, and phosphate donated by ATP, constituting the first step of 2 biosynthetic pathways, one leading to arginine and/or urea and the other to pyrimidine nucleotides. The small subunit (glutamine amidotransferase) binds and cleaves glutamine to supply the large subunit with the substrate ammonia. The sequence is that of Carbamoyl phosphate synthase small chain from Caldanaerobacter subterraneus subsp. tengcongensis (strain DSM 15242 / JCM 11007 / NBRC 100824 / MB4) (Thermoanaerobacter tengcongensis).